A 522-amino-acid chain; its full sequence is Target of rapamycin complex 2 subunit MAPKAP1 (522 aa).

A2 is subject to N-acetylalanine. An interaction with MAP3K2 region spans residues 2 to 184 (AFLDNPTIIL…KKIDVYLPLH (183 aa)). An interaction with NBN region spans residues 2 to 267 (AFLDNPTIIL…GFSTLALVEK (266 aa)). T86 is subject to Phosphothreonine. Residues S128, S186, S315, and S356 each carry the phosphoserine modification. The CRIM domain maps to 139 to 267 (QSILSVRLEQ…GFSTLALVEK (129 aa)). An SIN1-type RBD region spans residues 279–353 (LFVRINAAHG…QSAWEFCLVR (75 aa)). One can recognise an SIN1-type PH domain in the interval 382–487 (HYKSFKVSMI…IVLKVNYILE (106 aa)). R393 contributes to the a 1,2-diacyl-sn-glycero-3-phospho-(1D-myo-inositol-3,4,5-trisphosphate) binding site. Position 398 is a phosphothreonine (T398). 2 residues coordinate a 1,2-diacyl-sn-glycero-3-phospho-(1D-myo-inositol-3,4,5-trisphosphate): K428 and K464. The segment at 468-522 (FESDAATVNEIVLKVNYILESRASTARADYFAQKQRKLNRRTSFSFQKEKKSGQQ) is interaction with ATF2. S510 carries the phosphoserine modification.

It belongs to the SIN1 family. Component of the mechanistic target of rapamycin complex 2 (mTORC2), consisting in two heterotretramers composed of MTOR, MLST8, RICTOR and MAPKAP1/SIN1. The mTORC2 core complex associates with PRR5/PROTOR1 and/or PRR5L/PROTOR2. Contrary to mTORC1, mTORC2 does not bind to and is not sensitive to FKBP12-rapamycin. Interacts with MAP3K2. Interacts with ATF2. Interacts with MAPK8. Interacts with GTP-bound HRAS and KRAS; inhibiting their activity. Interacts with IFNAR2. As to quaternary structure, interacts with CCDC28B. In terms of assembly, interacts with NBN. Post-translationally, phosphorylation at Ser-128 by PKC promotes relocalization to the perinuclear region, where the mTORC2 complex specifically mediates phosphorylation of SGK1. Phosphorylated at Thr-86 by AKT1 or RPS6KB1 in the presence of growth factors; the effect of this phosphorylation is however unclear. According to two studies, phosphorylation at Thr-86 by AKT1 is part of a positive feedback loop that increases mTORC2 activation. According to another study, phosphorylation at Thr-86 and Thr-398 by RPS6KB1 promotes dissociation from the mTORC2 complex, leading to inhibit mTORC2 signaling. In terms of tissue distribution, ubiquitously expressed, with highest levels in heart and skeletal muscle.

Its subcellular location is the cell membrane. It is found in the endoplasmic reticulum membrane. The protein localises to the early endosome membrane. The protein resides in the late endosome membrane. It localises to the lysosome membrane. Its subcellular location is the golgi apparatus membrane. It is found in the mitochondrion outer membrane. The protein localises to the cytoplasm. The protein resides in the perinuclear region. It localises to the nucleus. Its subcellular location is the cytosol. Phosphatidylinositol 3,4,5-trisphosphate (PI(3,4,5)P3) promotes MTOR activation by relieving MAPKAP1/SIN1-mediated inhibition of MTOR that takes place in absence of PI(3,4,5)P3. Its function is as follows. Component of the mechanistic target of rapamycin complex 2 (mTORC2), which transduces signals from growth factors to pathways involved in proliferation, cytoskeletal organization, lipogenesis and anabolic output. In response to growth factors, mTORC2 phosphorylates and activates AGC protein kinase family members, including AKT (AKT1, AKT2 and AKT3), PKC (PRKCA, PRKCB and PRKCE) and SGK1. In contrast to mTORC1, mTORC2 is nutrient-insensitive. Within the mTORC2 complex, MAPKAP1/SIN1 acts as a substrate adapter which recognizes and binds AGC protein kinase family members for phosphorylation by MTOR. mTORC2 plays a critical role in AKT1 activation by mediating phosphorylation of different sites depending on the context, such as 'Thr-450', 'Ser-473', 'Ser-477' or 'Thr-479', facilitating the phosphorylation of the activation loop of AKT1 on 'Thr-308' by PDPK1/PDK1 which is a prerequisite for full activation. mTORC2 catalyzes the phosphorylation of SGK1 at 'Ser-422' and of PRKCA on 'Ser-657'. The mTORC2 complex also phosphorylates various proteins involved in insulin signaling, such as FBXW8 and IGF2BP1. mTORC2 acts upstream of Rho GTPases to regulate the actin cytoskeleton, probably by activating one or more Rho-type guanine nucleotide exchange factors. mTORC2 promotes the serum-induced formation of stress-fibers or F-actin. MAPKAP1 inhibits MAP3K2 by preventing its dimerization and autophosphorylation. Inhibits HRAS and KRAS independently of mTORC2 complex. Enhances osmotic stress-induced phosphorylation of ATF2 and ATF2-mediated transcription. Involved in ciliogenesis, regulates cilia length through its interaction with CCDC28B independently of mTORC2 complex. In contrast to isoform 1, isoform 2 and isoform 6, isoform 4 is not a component of the a mTORC2 complex. This Homo sapiens (Human) protein is Target of rapamycin complex 2 subunit MAPKAP1.